An 876-amino-acid chain; its full sequence is Alanine--tRNA ligase (876 aa).

The Zn(2+) site is built by His-565, His-569, Cys-667, and His-671.

This sequence belongs to the class-II aminoacyl-tRNA synthetase family. The cofactor is Zn(2+).

It is found in the cytoplasm. The enzyme catalyses tRNA(Ala) + L-alanine + ATP = L-alanyl-tRNA(Ala) + AMP + diphosphate. Catalyzes the attachment of alanine to tRNA(Ala) in a two-step reaction: alanine is first activated by ATP to form Ala-AMP and then transferred to the acceptor end of tRNA(Ala). Also edits incorrectly charged Ser-tRNA(Ala) and Gly-tRNA(Ala) via its editing domain. The protein is Alanine--tRNA ligase of Staphylococcus aureus (strain Mu3 / ATCC 700698).